A 75-amino-acid chain; its full sequence is Veswaprin-c (75 aa).

Positions methionine 1 to serine 24 are cleaved as a signal peptide. In terms of domain architecture, WAP spans arginine 27–isoleucine 72. Disulfide bonds link cysteine 34–cysteine 60, cysteine 43–cysteine 64, cysteine 47–cysteine 59, and cysteine 53–cysteine 68.

Belongs to the venom waprin family. In terms of tissue distribution, expressed by the venom gland.

The protein resides in the secreted. Its function is as follows. Damages membranes of susceptible bacteria. Has no hemolytic activity. Not toxic to mice. Does not inhibit the proteinases elastase and cathepsin G. In Demansia vestigiata (Lesser black whip snake), this protein is Veswaprin-c.